Here is a 502-residue protein sequence, read N- to C-terminus: Premnaspirodiene oxygenase (502 aa).

A helical transmembrane segment spans residues 2–22 (QFFSLVSIFLFLSFLFLLRKW). C440 is a binding site for heme.

It belongs to the cytochrome P450 family. Heme is required as a cofactor.

The protein resides in the membrane. The catalysed reaction is (-)-vetispiradiene + 2 reduced [NADPH--hemoprotein reductase] + 2 O2 = solavetivone + 2 oxidized [NADPH--hemoprotein reductase] + 3 H2O + 2 H(+). Its function is as follows. Involved in the biosynthesis of solavetivone, a potent antifungal phytoalexin. Catalyzes the successive and independent hydroxylations of premnaspirodiene and solavetivol. The first hydroxylation step is 3-fold more efficient than the second hydroxylation reaction. This chain is Premnaspirodiene oxygenase (CYP71D55), found in Hyoscyamus muticus (Egyptian henbane).